Reading from the N-terminus, the 488-residue chain is 3-octaprenyl-4-hydroxybenzoate carboxy-lyase (488 aa).

Residue N172 coordinates Mn(2+). Prenylated FMN-binding positions include 175–177 (IYR), 189–191 (RWL), and 194–195 (RG). Mn(2+) is bound at residue E238. D287 (proton donor) is an active-site residue.

The protein belongs to the UbiD family. As to quaternary structure, homohexamer. It depends on prenylated FMN as a cofactor. Mn(2+) is required as a cofactor.

The protein localises to the cell membrane. It catalyses the reaction a 4-hydroxy-3-(all-trans-polyprenyl)benzoate + H(+) = a 2-(all-trans-polyprenyl)phenol + CO2. Its pathway is cofactor biosynthesis; ubiquinone biosynthesis. Functionally, catalyzes the decarboxylation of 3-octaprenyl-4-hydroxy benzoate to 2-octaprenylphenol, an intermediate step in ubiquinone biosynthesis. This is 3-octaprenyl-4-hydroxybenzoate carboxy-lyase from Alkalilimnicola ehrlichii (strain ATCC BAA-1101 / DSM 17681 / MLHE-1).